The following is a 205-amino-acid chain: Spermatogenesis-associated protein 24 (205 aa).

The stretch at 17–167 (LAFDQLRDVI…QKQNFRNHIS (151 aa)) forms a coiled coil. A required for interaction with CBX5 and TBPL1 region spans residues 138 to 185 (EDILNGKENEIKELQQVISQQKQNFRNHISDFRIQKQQETYMAQVLDQ). The disordered stretch occupies residues 185 to 205 (QKRKKATGMRRARSRQCSREK). Over residues 186–205 (KRKKATGMRRARSRQCSREK) the composition is skewed to basic residues.

The protein belongs to the SPATA24 family. As to quaternary structure, homodimer. Interacts with CBX3, CBX5, GMNN, GTF2B, TBPL1 and the polycomb proteins PHCF2, RNF2 and SCMH1 but not with CBX1 or PCGF2. As to expression, testis-specific (at protein level).

Its subcellular location is the cytoplasm. It localises to the nucleus. The protein localises to the nucleolus. It is found in the nucleoplasm. Its function is as follows. Binds DNA with high affinity but does not bind to TATA boxes. Synergises with GMNN and TBP in activation of TATA box-containing promoters and with GMNN and TBPL1 in activation of the NF1 TATA-less promoter. May play a role in cytoplasm movement and removal during spermiogenesis. This chain is Spermatogenesis-associated protein 24 (Spata24), found in Mus musculus (Mouse).